A 465-amino-acid polypeptide reads, in one-letter code: Adenosylhomocysteinase (465 aa).

Substrate is bound by residues threonine 56, aspartate 131, and glutamate 191. 192–194 (TTT) serves as a coordination point for NAD(+). Substrate contacts are provided by lysine 221 and aspartate 225. Residues asparagine 226, 255–260 (GYGDVG), glutamate 278, asparagine 313, 334–336 (IGH), and asparagine 379 contribute to the NAD(+) site.

This sequence belongs to the adenosylhomocysteinase family. The cofactor is NAD(+).

It is found in the cytoplasm. The catalysed reaction is S-adenosyl-L-homocysteine + H2O = L-homocysteine + adenosine. The protein operates within amino-acid biosynthesis; L-homocysteine biosynthesis; L-homocysteine from S-adenosyl-L-homocysteine: step 1/1. Functionally, may play a key role in the regulation of the intracellular concentration of adenosylhomocysteine. This is Adenosylhomocysteinase from Bartonella tribocorum (strain CIP 105476 / IBS 506).